A 556-amino-acid chain; its full sequence is PTS system fructose-specific EIIB'BC component (556 aa).

PTS EIIB type-2 domains lie at 1–85 (MKLF…LANG) and 106–201 (IVAV…KAFK). Cys-112 acts as the Phosphocysteine intermediate; for EIIB activity in catalysis. Cys-112 bears the Phosphocysteine; by EIIA mark. In terms of domain architecture, PTS EIIC type-2 spans 224-556 (VYKHLMTGVS…AIIKSKNNAE (333 aa)). A run of 10 helical transmembrane segments spans residues 237–257 (PLVV…FNVI), 275–295 (SGVA…FSIA), 302–322 (VGLI…GGII), 324–344 (GFLA…PASL), 349–369 (PILI…IYLI), 390–410 (VNAI…MGGP), 431–451 (MAAA…ATWI), 468–488 (FVLG…ADPI), 490–510 (VIIS…GLNI), and 529–549 (LKYL…YAII).

The protein resides in the cell inner membrane. The catalysed reaction is D-fructose(out) + N(pros)-phospho-L-histidyl-[protein] = D-fructose 1-phosphate(in) + L-histidyl-[protein]. Functionally, the phosphoenolpyruvate-dependent sugar phosphotransferase system (sugar PTS), a major carbohydrate active transport system, catalyzes the phosphorylation of incoming sugar substrates concomitantly with their translocation across the cell membrane. The enzyme II FruAB PTS system is involved in fructose transport. The protein is PTS system fructose-specific EIIB'BC component of Haemophilus influenzae (strain ATCC 51907 / DSM 11121 / KW20 / Rd).